The chain runs to 381 residues: MIRKIPSFIEVYKSLIQIPTISSNNKLLDQSNKNFIDLLSNYFSDLNFSVKNYQIPHTDKYNMLACVGSGNGGLLLSGHSDTVDFDEKKWTKDPFKLTETNNKFYGLGAVDMKGFFALILEVISSINIKKINKPIYILATANEETDMSGAKNFIQSTIIKPDCIIIGEPTSLKLINAHKGHMSYSIKVIGDTGHSSNPDHGVNSIEIMHDVIRSLLILKKYFKEEYQHPNFSIPYPTMNLSSIHGGSAINRICPLCILNFEIRPIPGLTLTQIEIVIKEKLETIMKKWSHRIFIKKLFSSVPAYECPHNSGTIKIVEKLCQLNSAAVNYCTEAPFLQRIAPTLILGPGSIEQAHQPDEYLEHYFIQPTKNIITKLINKFCY.

His79 lines the Zn(2+) pocket. The active site involves Asp81. Position 111 (Asp111) interacts with Zn(2+). Glu143 is an active-site residue. Zn(2+) contacts are provided by Glu144, Glu168, and His354.

This sequence belongs to the peptidase M20A family. ArgE subfamily. As to quaternary structure, homodimer. Zn(2+) is required as a cofactor. The cofactor is Co(2+). It depends on glutathione as a cofactor.

Its subcellular location is the cytoplasm. It carries out the reaction N(2)-acetyl-L-ornithine + H2O = L-ornithine + acetate. It participates in amino-acid biosynthesis; L-arginine biosynthesis; L-ornithine from N(2)-acetyl-L-ornithine (linear): step 1/1. In terms of biological role, catalyzes the hydrolysis of the amide bond of N(2)-acetylated L-amino acids. Cleaves the acetyl group from N-acetyl-L-ornithine to form L-ornithine, an intermediate in L-arginine biosynthesis pathway, and a branchpoint in the synthesis of polyamines. In Buchnera aphidicola subsp. Acyrthosiphon pisum (strain Tuc7), this protein is Acetylornithine deacetylase.